A 342-amino-acid polypeptide reads, in one-letter code: Probable dual-specificity RNA methyltransferase RlmN (342 aa).

Glutamate 91 acts as the Proton acceptor in catalysis. The Radical SAM core domain occupies 97–327 (YKHGNSICVS…TTIRREMGAD (231 aa)). An intrachain disulfide couples cysteine 104 to cysteine 332. 3 residues coordinate [4Fe-4S] cluster: cysteine 111, cysteine 115, and cysteine 118. S-adenosyl-L-methionine contacts are provided by residues 158–159 (GE), serine 190, 213–215 (SLH), and asparagine 289. Cysteine 332 acts as the S-methylcysteine intermediate in catalysis.

This sequence belongs to the radical SAM superfamily. RlmN family. [4Fe-4S] cluster is required as a cofactor.

Its subcellular location is the cytoplasm. The enzyme catalyses adenosine(2503) in 23S rRNA + 2 reduced [2Fe-2S]-[ferredoxin] + 2 S-adenosyl-L-methionine = 2-methyladenosine(2503) in 23S rRNA + 5'-deoxyadenosine + L-methionine + 2 oxidized [2Fe-2S]-[ferredoxin] + S-adenosyl-L-homocysteine. It catalyses the reaction adenosine(37) in tRNA + 2 reduced [2Fe-2S]-[ferredoxin] + 2 S-adenosyl-L-methionine = 2-methyladenosine(37) in tRNA + 5'-deoxyadenosine + L-methionine + 2 oxidized [2Fe-2S]-[ferredoxin] + S-adenosyl-L-homocysteine. Functionally, specifically methylates position 2 of adenine 2503 in 23S rRNA and position 2 of adenine 37 in tRNAs. This Clostridium botulinum (strain Okra / Type B1) protein is Probable dual-specificity RNA methyltransferase RlmN.